The following is a 108-amino-acid chain: MKKNTHPEYRQVLFVDSSTGYKFVCGSTYQTDKTEVFEGQEYPVCYVSVSSSSHPFFTGSKKLVDAEGRVDKFLKRYSGVKQMAPKPETSVEEVLPKGKKKAPAKKKK.

A disordered region spans residues 85 to 108 (PKPETSVEEVLPKGKKKAPAKKKK). The segment covering 97–108 (KGKKKAPAKKKK) has biased composition (basic residues).

Belongs to the bacterial ribosomal protein bL31 family. Type B subfamily. As to quaternary structure, part of the 50S ribosomal subunit.

The polypeptide is Large ribosomal subunit protein bL31B (Chlamydia muridarum (strain MoPn / Nigg)).